Consider the following 510-residue polypeptide: 2-isopropylmalate synthase (510 aa).

One can recognise a Pyruvate carboxyltransferase domain in the interval 5–267 (LVIFDTTLRD…DTRIDTTQIV (263 aa)). Positions 14, 202, 204, and 238 each coordinate Mn(2+). The regulatory domain stretch occupies residues 392–510 (RLLSLVAHSE…SSLERTHPQV (119 aa)).

This sequence belongs to the alpha-IPM synthase/homocitrate synthase family. LeuA type 1 subfamily. In terms of assembly, homodimer. Mn(2+) is required as a cofactor.

The protein localises to the cytoplasm. It catalyses the reaction 3-methyl-2-oxobutanoate + acetyl-CoA + H2O = (2S)-2-isopropylmalate + CoA + H(+). It functions in the pathway amino-acid biosynthesis; L-leucine biosynthesis; L-leucine from 3-methyl-2-oxobutanoate: step 1/4. Functionally, catalyzes the condensation of the acetyl group of acetyl-CoA with 3-methyl-2-oxobutanoate (2-ketoisovalerate) to form 3-carboxy-3-hydroxy-4-methylpentanoate (2-isopropylmalate). The protein is 2-isopropylmalate synthase of Nitrosomonas eutropha (strain DSM 101675 / C91 / Nm57).